The sequence spans 186 residues: MGLLDRLSILLGLKKKEVHVLCLGLDNSGKTTIINKLKPSNAQSQNILPTIGFSIEKFKSSSLSFTVFDMSGQGRYRNLWEHYYKEGQAIIFVIDSSDRLRMVVAKEELDTLLNHPDIKHRRIPILFFANKMDLRDAVTSVKVSQLLCLENIKDKPWHICASDAIKGEGLQEGVDWLQDQIQTVKT.

G2 carries N-myristoyl glycine lipidation. GTP contacts are provided by residues 24 to 31 (GLDNSGKT), T50, 69 to 73 (DMSGQ), G72, 130 to 133 (NKMD), and A164. T50 provides a ligand contact to Mg(2+).

This sequence belongs to the small GTPase superfamily. Arf family. Interacts with SEC61B, ARL6IP1, ARL6IP2, ARL6IP3, ARL6IP4 ARL6IP5 and ARL6IP6. Interacts (GTP-bound form) with the BBSome a complex that contains BBS1, BBS2, BBS4, BBS5, BBS7, BBS8/TTC8, BBS9 and BBIP10. Interacts (GTP-free form) with IFT27.

It localises to the cell projection. The protein localises to the cilium membrane. The protein resides in the cytoplasm. Its subcellular location is the cytoskeleton. It is found in the cilium axoneme. It localises to the cilium basal body. Its function is as follows. Involved in membrane protein trafficking at the base of the ciliary organelle. Mediates recruitment onto plasma membrane of the BBSome complex which would constitute a coat complex required for sorting of specific membrane proteins to the primary cilia. Together with the BBSome complex and LTZL1, controls SMO ciliary trafficking and contributes to the sonic hedgehog (SHH) pathway regulation. May regulate cilia assembly and disassembly and subsequent ciliary signaling events such as the Wnt signaling cascade. Isoform 2 may be required for proper retinal function and organization. The sequence is that of ADP-ribosylation factor-like protein 6 (ARL6) from Pongo abelii (Sumatran orangutan).